The primary structure comprises 180 residues: Large ribosomal subunit protein uL6 (180 aa).

This sequence belongs to the universal ribosomal protein uL6 family. In terms of assembly, part of the 50S ribosomal subunit.

Its function is as follows. This protein binds to the 23S rRNA, and is important in its secondary structure. It is located near the subunit interface in the base of the L7/L12 stalk, and near the tRNA binding site of the peptidyltransferase center. The sequence is that of Large ribosomal subunit protein uL6 from Protochlamydia amoebophila (strain UWE25).